The following is a 332-amino-acid chain: ADP-L-glycero-D-manno-heptose-6-epimerase (332 aa).

NADP(+) contacts are provided by residues 10 to 11, 31 to 32, K38, 74 to 78, and N91; these read FI, DD, and QGACS. Y138 (proton acceptor) is an active-site residue. K142 provides a ligand contact to NADP(+). N167 contributes to the substrate binding site. NADP(+) is bound by residues V168 and K176. The active-site Proton acceptor is the K176. Residues R178, H185, 199–202, R212, and Y291 each bind substrate; that span reads FSGW.

Belongs to the NAD(P)-dependent epimerase/dehydratase family. HldD subfamily. In terms of assembly, homopentamer. Requires NADP(+) as cofactor.

The catalysed reaction is ADP-D-glycero-beta-D-manno-heptose = ADP-L-glycero-beta-D-manno-heptose. It functions in the pathway nucleotide-sugar biosynthesis; ADP-L-glycero-beta-D-manno-heptose biosynthesis; ADP-L-glycero-beta-D-manno-heptose from D-glycero-beta-D-manno-heptose 7-phosphate: step 4/4. In terms of biological role, catalyzes the interconversion between ADP-D-glycero-beta-D-manno-heptose and ADP-L-glycero-beta-D-manno-heptose via an epimerization at carbon 6 of the heptose. In Bordetella avium (strain 197N), this protein is ADP-L-glycero-D-manno-heptose-6-epimerase.